A 105-amino-acid polypeptide reads, in one-letter code: Ferredoxin-2 (105 aa).

The region spanning 4-94 is the 2Fe-2S ferredoxin-type domain; sequence YQVEVIYQGQ…DLKIETHKED (91 aa). Residues Cys40, Cys45, Cys48, and Cys78 each contribute to the [2Fe-2S] cluster site.

This sequence belongs to the 2Fe2S plant-type ferredoxin family. Forms a complex with heterodimeric ferredoxin-thioredoxin reductase (FTR) and thioredoxin. It depends on [2Fe-2S] cluster as a cofactor.

Its function is as follows. Ferredoxins are iron-sulfur proteins that transfer electrons in a wide variety of metabolic reactions. This chain is Ferredoxin-2 (petF2), found in Synechococcus sp. (strain ATCC 27144 / PCC 6301 / SAUG 1402/1) (Anacystis nidulans).